Consider the following 380-residue polypeptide: Selenoprotein P (380 aa).

An N-terminal signal peptide occupies residues 1-19 (MWRSLGLALALCLLPYGGA). Position 59 (Sec59) is a non-standard amino acid, selenocysteine. N-linked (GlcNAc...) asparagine glycosylation is found at Asn83, Asn176, and Asn195. The disordered stretch occupies residues 196 to 257 (KTAEPSEAHS…RGQHRQGHLE (62 aa)). Positions 221–237 (SKPSENQQPGPSETTLP) are enriched in polar residues. The segment covering 241 to 253 (LHHHHRHRGQHRQ) has biased composition (basic residues). A non-standard amino acid (selenocysteine) is located at residue Sec259. Phosphoserine is present on Ser264. Residues Sec277, Sec318, Sec330, and Sec352 are each a non-standard amino acid (selenocysteine). The tract at residues 346–380 (RSPPAAUQNQPMNPMEANPNUSUDNQTRKUKUHSN) is disordered. Residues 348 to 360 (PPAAUQNQPMNPM) are compositionally biased toward low complexity. A glycan (N-linked (GlcNAc...) asparagine) is linked at Asn365. Non-standard amino acids (selenocysteine) are located at Sec366 and Sec368. Asn370 carries an N-linked (GlcNAc...) asparagine glycan. Non-standard amino acids (selenocysteine) are located at Sec375 and Sec377.

It belongs to the selenoprotein P family. Post-translationally, phosphorylation sites are present in the extracellular medium. In the kidney, expressed in the cortex with no expression observed in the medulla (at protein level). Expressed by the liver and secreted in plasma.

Its subcellular location is the secreted. Its function is as follows. Might be responsible for some of the extracellular antioxidant defense properties of selenium or might be involved in the transport of selenium. May supply selenium to tissues such as brain and testis. The sequence is that of Selenoprotein P from Mus musculus (Mouse).